A 412-amino-acid chain; its full sequence is NADH-quinone oxidoreductase subunit 4 (412 aa).

This sequence belongs to the complex I 49 kDa subunit family. NDH-1 is composed of at least 14 different subunits, Nqo1 to Nqo14. The complex has a L-shaped structure, with the hydrophobic arm (subunits Nqo7, Nqo8, Nqo10 to Nqo14) embedded in the inner membrane and the hydrophilic peripheral arm (subunits Nqo1 to Nqo6, Nqo9) protruding into the bacterial cytoplasm. The hydrophilic domain contains all the redox centers.

The protein localises to the cell inner membrane. It catalyses the reaction a quinone + NADH + 5 H(+)(in) = a quinol + NAD(+) + 4 H(+)(out). Its function is as follows. NDH-1 shuttles electrons from NADH, via FMN and iron-sulfur (Fe-S) centers, to quinones in the respiratory chain. The immediate electron acceptor for the enzyme in this species is believed to be ubiquinone. Couples the redox reaction to proton translocation (for every two electrons transferred, four hydrogen ions are translocated across the cytoplasmic membrane), and thus conserves the redox energy in a proton gradient. The sequence is that of NADH-quinone oxidoreductase subunit 4 (nqo4) from Paracoccus denitrificans.